The following is a 353-amino-acid chain: Phospho-furanose lactonase (353 aa).

5 residues coordinate Zn(2+): histidine 24, histidine 26, lysine 153, histidine 186, and histidine 214. Position 153 is an N6-carboxylysine (lysine 153). A substrate-binding site is contributed by lysine 244–tyrosine 245. Zn(2+) is bound at residue aspartate 272. Arginine 275–tyrosine 278 is a substrate binding site.

It belongs to the metallo-dependent hydrolases superfamily. Phosphotriesterase family. The cofactor is Zn(2+).

It catalyses the reaction a 1,4-lactone + H2O = a 4-hydroxyacid + H(+). The catalysed reaction is D-xylono-1,4-lactone 5-phosphate + H2O = 5-phospho-D-xylonate + H(+). It carries out the reaction L-arabino-1,4-lactone 5-phosphate + H2O = 5-phospho-L-arabinonate + H(+). In terms of biological role, catalyzes the hydrolysis of D-xylono-1,4-lactone-5-phosphate and L-arabino-1,4-lactone-5-phosphate. Also able to hydrolyze carboxy 1,4-lactones. The protein is Phospho-furanose lactonase of Mycoplasmopsis synoviae (strain 53) (Mycoplasma synoviae).